The following is a 1165-amino-acid chain: Serine/threonine-protein kinase/endoribonuclease ireA (1165 aa).

An N-terminal signal peptide occupies residues 1-27; sequence MRWRLPGARTTLPASVALLLLPILVAP. Residues 28–504 are Lumenal-facing; sequence QQLQEHDDLP…STIIRKGWDN (477 aa). Asn-152 carries N-linked (GlcNAc...) asparagine glycosylation. The helical transmembrane segment at 505–525 threads the bilayer; that stretch reads AVDIFVTILLLFFGAFIYFNS. Residues 526–1165 lie on the Cytoplasmic side of the membrane; that stretch reads HNIQELAKQK…RFKRYFTPVE (640 aa). Residues 547–668 are disordered; the sequence is QPPLSTPSTP…SEGESKDQAD (122 aa). 2 stretches are compositionally biased toward basic and acidic residues: residues 591–600 and 611–620; these read ATPKPKRDRS and KIREPSRGPD. Basic residues predominate over residues 637-655; that stretch reads PKKKARRGRRGGKNHRRGK. Residues 656–668 are compositionally biased toward basic and acidic residues; that stretch reads KPDSEGESKDQAD. Residues 711–1026 enclose the Protein kinase domain; the sequence is VFSDVVLGHG…ASAVLMHPFF (316 aa). ATP-binding positions include 717-725 and Lys-739; that span reads LGHGSHGTV. Asp-832 functions as the Proton acceptor in the catalytic mechanism. The segment at 899 to 919 is disordered; it reads AIQGGESQHTESSEPAVVDPQ. A KEN domain is found at 1029–1163; it reads PSDRLSFLCD…IDRFKRYFTP (135 aa).

This sequence belongs to the protein kinase superfamily. Ser/Thr protein kinase family. Homodimer; in response to the accumulation of unfolded proteins. Mg(2+) is required as a cofactor. Autophosphorylated mainly on serine residues.

Its subcellular location is the membrane. It carries out the reaction L-seryl-[protein] + ATP = O-phospho-L-seryl-[protein] + ADP + H(+). The enzyme catalyses L-threonyl-[protein] + ATP = O-phospho-L-threonyl-[protein] + ADP + H(+). 8-formyl-7-hydroxy-4-methylcoumarin inhibits the endonuclease activity and prebvent the splicing if the hacA mRNA. The kinase domain is activated by trans-autophosphorylation. Kinase activity is required for activation of the endoribonuclease domain. Its function is as follows. Senses unfolded proteins in the lumen of the endoplasmic reticulum (ER) via its N-terminal domain which leads to enzyme auto-activation. The active endoribonuclease domain responds by cleaving an intron from the downstream cytoplasmic mRNA hacA, allowing for the translation of a transcription factor that coordinates a series of adaptive responses that are collectively known as the unfolded protein response (UPR). In the absence of ER stress, ireA controls dual signaling circuits that are both hacA-dependent and hacA-independent and which contribute to the expression of traits that are essential for virulence. This Aspergillus fumigatus (strain ATCC MYA-4609 / CBS 101355 / FGSC A1100 / Af293) (Neosartorya fumigata) protein is Serine/threonine-protein kinase/endoribonuclease ireA.